The primary structure comprises 758 residues: Spastin (758 aa).

The tract at residues 1–99 (MVRTKNQSSS…PTTCSPRSGH (99 aa)) is disordered. The Cytoplasmic portion of the chain corresponds to 1–121 (MVRTKNQSSS…KQNLYVVSFP (121 aa)). Residues 1–210 (MVRTKNQSSS…RPIQPLEMAA (210 aa)) form a required for localization to punctate cytoplasmic foci region. 4 stretches are compositionally biased toward low complexity: residues 8–28 (SSSSSASSSSTKSPIKSSSGA), 43–58 (RSSSASNVAAVVAGGS), 66–76 (SSNRRSPGSSP), and 85–95 (TDDLTPTTCSP). The helical intramembrane region spans 122–142 (IIFLFNVLRSLIYQLFCIFRY). The Cytoplasmic segment spans residues 143-758 (LYGASTKVIY…WSQDYGDITI (616 aa)). 2 stretches are compositionally biased toward polar residues: residues 169–180 (SKEQQQSLNHPS) and 189–198 (QEQQLSNQPQ). Residues 169–203 (SKEQQQSLNHPSELSREGDGQEQQLSNQPQRFRPI) form a disordered region. The segment at 208-758 (MAANRPGGGY…WSQDYGDITI (551 aa)) is sufficient for interaction with microtubules and microtubule severing. One can recognise an MIT domain in the interval 233–308 (HRRAFEYISK…SMARDRLHFL (76 aa)). 2 disordered regions span residues 353–375 (RVRSSGYGPKATTSAQPTASGRK) and 390–454 (NKSQ…ASTP). Composition is skewed to polar residues over residues 390–406 (NKSQTLPRNLGSKTSVG) and 425–454 (QFSSGRNTPPQRSRTPINNNGPSGSGASTP). Positions 443 to 455 (NNGPSGSGASTPV) are required for interaction with microtubules. An ATP-binding site is contributed by 523–530 (GPPGNGKT).

This sequence belongs to the AAA ATPase family. Spastin subfamily. As to quaternary structure, homohexamer. The homohexamer is stabilized by ATP-binding. The homohexamer may adopt a ring conformation through which microtubules pass prior to being severed. Interacts with microtubules. Interacts with atl; may be involved in microtubule dynamics.

The protein resides in the membrane. The protein localises to the cytoplasm. It is found in the cytoskeleton. Its subcellular location is the microtubule organizing center. It localises to the centrosome. The protein resides in the chromosome. The protein localises to the lipid droplet. It catalyses the reaction n ATP + n H2O + a microtubule = n ADP + n phosphate + (n+1) alpha/beta tubulin heterodimers.. Its function is as follows. ATP-dependent microtubule severing protein. Stimulates microtubule minus-end depolymerization and poleward microtubule flux in the mitotic spindle. Regulates microtubule stability in the neuromuscular junction synapse. Involved in lipid metabolism by regulating the size and distribution of lipid droplets. Involved in axon regeneration by regulating microtubule severing. The sequence is that of Spastin from Drosophila erecta (Fruit fly).